The following is a 117-amino-acid chain: UPF0295 protein GK0479 (117 aa).

Helical transmembrane passes span 12–32 (IRTF…LGLF) and 42–62 (LFML…FWIG).

This sequence belongs to the UPF0295 family.

Its subcellular location is the cell membrane. This is UPF0295 protein GK0479 from Geobacillus kaustophilus (strain HTA426).